The following is a 467-amino-acid chain: Pentatricopeptide repeat-containing protein At1g77170, mitochondrial (467 aa).

Residues 1–30 (MFFSGLISKLHVHGTKRTNHFTIFHRLNHF) constitute a mitochondrion transit peptide. 9 PPR repeats span residues 81–115 (IAFLWNNIMRSYIRHESPLDAIQVYLGMVRSTVLP), 116–150 (DRYSLPIVIKAAVQIHDFTLGKELHSVAVRLGFVG), 151–181 (DEFCESGFITLYCKAGEFENARKVFDENPER), 182–216 (KLGSWNAIIGGLNHAGRANEAVEMFVDMKRSGLEP), 217–251 (DDFTMVSVTASCGGLGDLSLAFQLHKCVLQAKTEE), 254–284 (DIMMLNSLIDMYGKCGRMDLASHIFEEMRQR), 285–319 (NVVSWSSMIVGYAANGNTLEALECFRQMREFGVRP), 320–350 (NKITFVGVLSACVHGGLVEEGKTYFAMMKSE), and 356–386 (GLSHYGCIVDLLSRDGQLKEAKKVVEEMPMK). The interval 391–466 (VWGCLMGGCE…IPAYSYASTT (76 aa)) is type E motif.

This sequence belongs to the PPR family. PCMP-E subfamily.

Its subcellular location is the mitochondrion. The polypeptide is Pentatricopeptide repeat-containing protein At1g77170, mitochondrial (PCMP-E21) (Arabidopsis thaliana (Mouse-ear cress)).